The following is a 157-amino-acid chain: Fimbrial protein Q (157 aa).

Positions 1–6 are excised as a propeptide; the sequence is MNAQKG. Position 7 is an N-methylphenylalanine (Phe-7). Cysteines 136 and 155 form a disulfide.

Belongs to the N-Me-Phe pilin family. The pili are polar flexible filaments of about 5.4 nanometers diameter and 2.5 micrometers average length; they consist of only a single polypeptide chain arranged in a helical configuration of five subunits per turn in the assembled pilus.

The protein resides in the fimbrium. This chain is Fimbrial protein Q (tfpQ), found in Moraxella bovis.